The sequence spans 244 residues: 6-carboxyhexanoate--CoA ligase (244 aa).

Belongs to the BioW family. In terms of assembly, homodimer. Mg(2+) is required as a cofactor.

It carries out the reaction heptanedioate + ATP + CoA = 6-carboxyhexanoyl-CoA + AMP + diphosphate. It functions in the pathway metabolic intermediate metabolism; pimeloyl-CoA biosynthesis; pimeloyl-CoA from pimelate: step 1/1. Functionally, catalyzes the transformation of pimelate into pimeloyl-CoA with concomitant hydrolysis of ATP to AMP. The polypeptide is 6-carboxyhexanoate--CoA ligase (Methanococcus maripaludis (strain DSM 14266 / JCM 13030 / NBRC 101832 / S2 / LL)).